Reading from the N-terminus, the 363-residue chain is 3-isopropylmalate dehydrogenase (363 aa).

Residue 78 to 91 (XXXXXXXXXXXXXX) participates in NAD(+) binding. Substrate-binding residues include arginine 99, arginine 109, arginine 138, and aspartate 227. Mg(2+) contacts are provided by aspartate 227, aspartate 251, and aspartate 255. 285 to 297 (GSAPDIEGKNIAN) lines the NAD(+) pocket.

The protein belongs to the isocitrate and isopropylmalate dehydrogenases family. LeuB type 1 subfamily. Homodimer. Requires Mg(2+) as cofactor. Mn(2+) is required as a cofactor.

Its subcellular location is the cytoplasm. The enzyme catalyses (2R,3S)-3-isopropylmalate + NAD(+) = 4-methyl-2-oxopentanoate + CO2 + NADH. Its pathway is amino-acid biosynthesis; L-leucine biosynthesis; L-leucine from 3-methyl-2-oxobutanoate: step 3/4. Functionally, catalyzes the oxidation of 3-carboxy-2-hydroxy-4-methylpentanoate (3-isopropylmalate) to 3-carboxy-4-methyl-2-oxopentanoate. The product decarboxylates to 4-methyl-2 oxopentanoate. The sequence is that of 3-isopropylmalate dehydrogenase from Buchnera aphidicola subsp. Uroleucon solidaginis.